The chain runs to 82 residues: UPF0180 protein BC_1394 (82 aa).

Belongs to the UPF0180 family.

The chain is UPF0180 protein BC_1394 from Bacillus cereus (strain ATCC 14579 / DSM 31 / CCUG 7414 / JCM 2152 / NBRC 15305 / NCIMB 9373 / NCTC 2599 / NRRL B-3711).